Here is a 248-residue protein sequence, read N- to C-terminus: Tryptophan synthase alpha chain (248 aa).

Residues Glu-36 and Asp-47 each act as proton acceptor in the active site.

Belongs to the TrpA family. As to quaternary structure, tetramer of two alpha and two beta chains.

It carries out the reaction (1S,2R)-1-C-(indol-3-yl)glycerol 3-phosphate + L-serine = D-glyceraldehyde 3-phosphate + L-tryptophan + H2O. It participates in amino-acid biosynthesis; L-tryptophan biosynthesis; L-tryptophan from chorismate: step 5/5. In terms of biological role, the alpha subunit is responsible for the aldol cleavage of indoleglycerol phosphate to indole and glyceraldehyde 3-phosphate. The polypeptide is Tryptophan synthase alpha chain (Pyrococcus abyssi (strain GE5 / Orsay)).